A 454-amino-acid polypeptide reads, in one-letter code: Chromosomal replication initiator protein DnaA (454 aa).

Residues Met-1–Ala-81 are domain I, interacts with DnaA modulators. A disordered region spans residues Gly-79–Asp-110. Residues Ala-81–Ser-117 form a domain II region. Over residues Ser-82 to Pro-91 the composition is skewed to polar residues. The tract at residues Asn-118–Val-334 is domain III, AAA+ region. ATP contacts are provided by Gly-162, Gly-164, Lys-165, and Thr-166. The domain IV, binds dsDNA stretch occupies residues Gln-335 to Ser-454.

The protein belongs to the DnaA family. Oligomerizes as a right-handed, spiral filament on DNA at oriC.

Its subcellular location is the cytoplasm. In terms of biological role, plays an essential role in the initiation and regulation of chromosomal replication. ATP-DnaA binds to the origin of replication (oriC) to initiate formation of the DNA replication initiation complex once per cell cycle. Binds the DnaA box (a 9 base pair repeat at the origin) and separates the double-stranded (ds)DNA. Forms a right-handed helical filament on oriC DNA; dsDNA binds to the exterior of the filament while single-stranded (ss)DNA is stabiized in the filament's interior. The ATP-DnaA-oriC complex binds and stabilizes one strand of the AT-rich DNA unwinding element (DUE), permitting loading of DNA polymerase. After initiation quickly degrades to an ADP-DnaA complex that is not apt for DNA replication. Binds acidic phospholipids. The protein is Chromosomal replication initiator protein DnaA of Idiomarina loihiensis (strain ATCC BAA-735 / DSM 15497 / L2-TR).